The following is a 66-amino-acid chain: MSQPMTVDCPTCGAPVEWGEKSPFRPFCSDRCKLIDLGAWAAEEHKIAGAEESEDELYSGDLEPRH.

Zn(2+) contacts are provided by Cys9, Cys12, Cys28, and Cys32. The tract at residues 45–66 is disordered; it reads HKIAGAEESEDELYSGDLEPRH.

This sequence belongs to the DNA gyrase inhibitor YacG family. In terms of assembly, interacts with GyrB. The cofactor is Zn(2+).

Inhibits all the catalytic activities of DNA gyrase by preventing its interaction with DNA. Acts by binding directly to the C-terminal domain of GyrB, which probably disrupts DNA binding by the gyrase. This is DNA gyrase inhibitor YacG from Pseudomonas entomophila (strain L48).